The sequence spans 393 residues: Interferon regulatory factor 9 (393 aa).

Positions 9–116 (TRKLRNWVVE…EPYKVYQLLP (108 aa)) form a DNA-binding region, IRF tryptophan pentad repeat. 2 disordered regions span residues 120 to 151 (VSGQ…AMQN) and 163 to 202 (LNNE…APFQ). A Phosphoserine modification is found at Ser139.

It belongs to the IRF family. In terms of assembly, interacts with STAT2 in the cytoplasm. Forms the interferon-stimulated gene factor 3 complex (ISGF3) with the heterodimer STAT1:STAT2; upon stimulation. (Microbial infection) Interacts with measles virus V protein; this interaction prevents the binding of IRF9 to STAT2 and thereby the type I interferon signaling pathway. Post-translationally, (Microbial infection) Ubiquitinated by Herpes simplex virus 2 E3 ubiquitin ligase ICP22.

The protein resides in the cytoplasm. It is found in the nucleus. Functionally, transcription factor that plays an essential role in anti-viral immunity. It mediates signaling by type I IFNs (IFN-alpha and IFN-beta). Following type I IFN binding to cell surface receptors, Jak kinases (TYK2 and JAK1) are activated, leading to tyrosine phosphorylation of STAT1 and STAT2. IRF9/ISGF3G associates with the phosphorylated STAT1:STAT2 dimer to form a complex termed ISGF3 transcription factor, that enters the nucleus. ISGF3 binds to the IFN stimulated response element (ISRE) to activate the transcription of interferon stimulated genes, which drive the cell in an antiviral state. The polypeptide is Interferon regulatory factor 9 (IRF9) (Homo sapiens (Human)).